Here is a 393-residue protein sequence, read N- to C-terminus: Protein TsgA (393 aa).

The next 12 helical transmembrane spans lie at Trp-11 to Met-31, Phe-51 to Pro-71, Phe-78 to Leu-98, Thr-101 to Ile-121, Leu-134 to Phe-154, Trp-162 to Gly-182, Ile-206 to Ile-226, Thr-245 to Leu-265, Ile-273 to Pro-293, Ala-297 to Leu-317, Phe-332 to Val-352, and Leu-361 to Val-381.

It belongs to the major facilitator superfamily. TsgA family.

The protein resides in the cell inner membrane. This chain is Protein TsgA, found in Shigella boydii serotype 4 (strain Sb227).